A 341-amino-acid chain; its full sequence is Nicotinate-nucleotide--dimethylbenzimidazole phosphoribosyltransferase (341 aa).

E310 (proton acceptor) is an active-site residue.

This sequence belongs to the CobT family.

It catalyses the reaction 5,6-dimethylbenzimidazole + nicotinate beta-D-ribonucleotide = alpha-ribazole 5'-phosphate + nicotinate + H(+). It functions in the pathway nucleoside biosynthesis; alpha-ribazole biosynthesis; alpha-ribazole from 5,6-dimethylbenzimidazole: step 1/2. Its function is as follows. Catalyzes the synthesis of alpha-ribazole-5'-phosphate from nicotinate mononucleotide (NAMN) and 5,6-dimethylbenzimidazole (DMB). The protein is Nicotinate-nucleotide--dimethylbenzimidazole phosphoribosyltransferase of Vibrio cholerae serotype O1 (strain ATCC 39315 / El Tor Inaba N16961).